The chain runs to 151 residues: 3-hydroxyacyl-[acyl-carrier-protein] dehydratase FabZ (151 aa).

Residue His49 is part of the active site.

The protein belongs to the thioester dehydratase family. FabZ subfamily.

The protein resides in the cytoplasm. It catalyses the reaction a (3R)-hydroxyacyl-[ACP] = a (2E)-enoyl-[ACP] + H2O. Involved in unsaturated fatty acids biosynthesis. Catalyzes the dehydration of short chain beta-hydroxyacyl-ACPs and long chain saturated and unsaturated beta-hydroxyacyl-ACPs. The chain is 3-hydroxyacyl-[acyl-carrier-protein] dehydratase FabZ from Bordetella parapertussis (strain 12822 / ATCC BAA-587 / NCTC 13253).